The following is a 432-amino-acid chain: FLYWCH-type zinc finger-containing protein peb-1 (432 aa).

Residues 1 to 33 (MLGLEKPLSSDISSSSTDTSAISPISVSSMPLS) form a disordered region. Residues 9–26 (SSDISSSSTDTSAISPIS) show a composition bias toward low complexity. The segment at residues 30–188 (MPLSPDKEKK…RNKEGKPRKP (159 aa)) is a DNA-binding region (required for DNA-binding). The FLYWCH-type zinc-finger motif lies at 53–120 (IVTSFKGYQK…NACTKNTHNH (68 aa)). Residues 174-195 (SLVSARNKEGKPRKPKSKTSTN) form a disordered region.

The protein localises to the nucleus. In terms of biological role, putative transcription factor. Binds to specific sequence motif 5'-[TC][AGT]TGCC[GA][AT]-3' in regulatory elements of target genes such as myosin myo-2. May modulate gene expression, perhaps acting in opposition to transcription factor pha-4. Involved in morphogenesis, perhaps especially in formation of the pharynx. Plays roles in molting, feeding and morphology. The polypeptide is FLYWCH-type zinc finger-containing protein peb-1 (Caenorhabditis briggsae).